The primary structure comprises 80 residues: Small membrane A-kinase anchor protein (80 aa).

G2 is lipidated: N-myristoyl glycine.

Belongs to the small membrane AKAP family. In terms of processing, may be palmitoylated at Cys-3.

Its subcellular location is the cell membrane. In terms of biological role, binds to type I regulatory subunits of protein kinase A and may anchor/target them to the plasma membrane. In Tetraodon nigroviridis (Spotted green pufferfish), this protein is Small membrane A-kinase anchor protein.